The following is a 443-amino-acid chain: D(2) dopamine receptor (443 aa).

Topologically, residues Met-1–Tyr-37 are extracellular. Residues Asn-5, Asn-17, and Asn-23 are each glycosylated (N-linked (GlcNAc...) asparagine). The helical transmembrane segment at Ala-38–Ser-60 threads the bilayer. Over Arg-61 to Asn-70 the chain is Cytoplasmic. A helical transmembrane segment spans residues Tyr-71–Tyr-93. Residues Leu-94–Asp-108 are Extracellular-facing. An intrachain disulfide couples Cys-107 to Cys-182. Residues Ile-109 to Ile-130 form a helical membrane-spanning segment. Topologically, residues Asp-131–Arg-151 are cytoplasmic. The chain crosses the membrane as a helical span at residues Val-152 to Phe-172. The Extracellular portion of the chain corresponds to Gly-173–Ala-188. Residues Phe-189 to Tyr-213 form a helical membrane-spanning segment. The interval Lys-211 to Gln-373 is interaction with PPP1R9B. Over Ile-214 to Gln-373 the chain is Cytoplasmic. The interval Met-281 to Lys-332 is disordered. A helical transmembrane segment spans residues Met-374–Leu-395. Residues Asn-396–Ser-409 are Extracellular-facing. The cysteines at positions 399 and 401 are disulfide-linked. A helical transmembrane segment spans residues Ala-410–Ile-431. Over Glu-432 to Cys-443 the chain is Cytoplasmic. Residue Cys-443 is the site of S-palmitoyl cysteine attachment.

Belongs to the G-protein coupled receptor 1 family. As to quaternary structure, forms homo- and heterooligomers with DRD4. The interaction with DRD4 may modulate agonist-induced downstream signaling. Interacts with CADPS and CADPS2. Interacts with GPRASP1, PPP1R9B and CLIC6. Interacts with ARRB2. Interacts with HTR2A. Interacts with DRD1. Interacts with KCNA2. Post-translationally, palmitoylated. Palmitoylation which is required for proper localization to the plasma membrane and stability of the receptor could be carried on by ZDHHC4, ZDHHC3 and ZDHHC8.

The protein localises to the cell membrane. It localises to the golgi apparatus membrane. Dopamine receptor whose activity is mediated by G proteins which inhibit adenylyl cyclase. Positively regulates postnatal regression of retinal hyaloid vessels via suppression of VEGFR2/KDR activity, downstream of OPN5. This Chlorocebus aethiops (Green monkey) protein is D(2) dopamine receptor (DRD2).